We begin with the raw amino-acid sequence, 235 residues long: Orotidine 5'-phosphate decarboxylase (235 aa).

Residues aspartate 10, lysine 33, 60–69 (DLKMSDIPNT), threonine 123, arginine 185, glutamine 194, glycine 214, and arginine 215 each bind substrate. Lysine 62 (proton donor) is an active-site residue.

This sequence belongs to the OMP decarboxylase family. Type 1 subfamily. Homodimer.

The enzyme catalyses orotidine 5'-phosphate + H(+) = UMP + CO2. Its pathway is pyrimidine metabolism; UMP biosynthesis via de novo pathway; UMP from orotate: step 2/2. Catalyzes the decarboxylation of orotidine 5'-monophosphate (OMP) to uridine 5'-monophosphate (UMP). The sequence is that of Orotidine 5'-phosphate decarboxylase from Lactobacillus gasseri (strain ATCC 33323 / DSM 20243 / BCRC 14619 / CIP 102991 / JCM 1131 / KCTC 3163 / NCIMB 11718 / NCTC 13722 / AM63).